Consider the following 406-residue polypeptide: Phosphopentomutase (406 aa).

Mn(2+)-binding residues include aspartate 10, aspartate 305, histidine 310, aspartate 346, histidine 347, and histidine 358.

This sequence belongs to the phosphopentomutase family. The cofactor is Mn(2+).

It localises to the cytoplasm. It catalyses the reaction 2-deoxy-alpha-D-ribose 1-phosphate = 2-deoxy-D-ribose 5-phosphate. It carries out the reaction alpha-D-ribose 1-phosphate = D-ribose 5-phosphate. It functions in the pathway carbohydrate degradation; 2-deoxy-D-ribose 1-phosphate degradation; D-glyceraldehyde 3-phosphate and acetaldehyde from 2-deoxy-alpha-D-ribose 1-phosphate: step 1/2. Its function is as follows. Isomerase that catalyzes the conversion of deoxy-ribose 1-phosphate (dRib-1-P) and ribose 1-phosphate (Rib-1-P) to deoxy-ribose 5-phosphate (dRib-5-P) and ribose 5-phosphate (Rib-5-P), respectively. The polypeptide is Phosphopentomutase (Vibrio parahaemolyticus serotype O3:K6 (strain RIMD 2210633)).